Here is a 216-residue protein sequence, read N- to C-terminus: Refilin-B (216 aa).

The disordered stretch occupies residues 1–52 (MVGRLSLQDVPELVDTKKKGDGVLDSPDSGLPPSPSPSHWGLAAATGGGGER). Phosphoserine is present on residues S6 and S26.

The protein belongs to the Refilin family. In terms of assembly, interacts with FLNA and FLNB.

Its subcellular location is the cytoplasm. The protein localises to the cytoskeleton. Involved in the regulation of the perinuclear actin network and nuclear shape through interaction with filamins. Plays an essential role in the formation of cartilaginous skeletal elements. The polypeptide is Refilin-B (Rattus norvegicus (Rat)).